A 577-amino-acid chain; its full sequence is MADITDKTAEQLENLNIQDDQKQAATGSESQSVENSSASLYVGDLEPSVSEAHLYDIFSPIGSVSSIRVCRDAITKTSLGYAYVNFNDHEAGRKAIEQLNYTPIKGRLCRIMWSQRDPSLRKKGSGNIFIKNLHPDIDNKALYDTFSVFGDILSSKIATDENGKSKGFGFVHFEEEGAAKEAIDALNGMLLNGQEIYVAPHLSRKERDSQLEETKAHYTNLYVKNINSETTDEQFQELFAKFGPIVSASLEKDADGKLKGFGFVNYEKHEDAVKAVEALNDSELNGEKLYVGRAQKKNERMHVLKKQYEAYRLEKMAKYQGVNLFVKNLDDSVDDEKLEEEFAPYGTITSAKVMRTENGKSKGFGFVCFSTPEEATKAITEKNQQIVAGKPLYVAIAQRKDVRRSQLAQQIQARNQMRYQQATAAAAAAAAGMPGQFMPPMFYGVMPPRGVPFNGPNPQQMNPMGGMPKNGMPPQFRNGPVYGVPPQGGFPRNANDNNQFYQQKQRQALGEQLYKKVSAKTSNEEAAGKITGMILDLPPQEVFPLLESDELFEQHYKEASAAYESFKKEQEQQTEQA.

Over residues 1 to 10 (MADITDKTAE) the composition is skewed to basic and acidic residues. Residues 1-36 (MADITDKTAEQLENLNIQDDQKQAATGSESQSVENS) form a disordered region. Alanine 2 is subject to N-acetylalanine. Residue lysine 7 forms a Glycyl lysine isopeptide (Lys-Gly) (interchain with G-Cter in ubiquitin) linkage. A required and sufficient for nuclear export region spans residues 9–61 (AEQLENLNIQDDQKQAATGSESQSVENSSASLYVGDLEPSVSEAHLYDIFSPI). The span at 11–27 (QLENLNIQDDQKQAATG) shows a compositional bias: polar residues. The Nuclear export signal signature appears at 12–17 (LENLNI). RRM domains lie at 38–116 (ASLY…WSQR), 126–203 (GNIF…PHLS), 219–296 (TNLY…RAQK), and 322–399 (VNLF…IAQR). An Omega-N-methylarginine modification is found at arginine 107. Serine 249 bears the Phosphoserine mark. The segment at 281 to 317 (DSELNGEKLYVGRAQKKNERMHVLKKQYEAYRLEKMA) is required and sufficient for nuclear import. Serine 332 carries the post-translational modification Phosphoserine. Lysine 337 is covalently cross-linked (Glycyl lysine isopeptide (Lys-Gly) (interchain with G-Cter in ubiquitin)). At serine 405 the chain carries Phosphoserine. Residues 473-577 (PPQFRNGPVY…KEQEQQTEQA (105 aa)) are interaction with SUP35. The 80-residue stretch at 489–568 (GFPRNANDNN…ASAAYESFKK (80 aa)) folds into the PABC domain.

It belongs to the polyadenylate-binding protein type-1 family. Binds to poly(A) mRNA to form a periodic structure with a packing density of one molecule per 25 adenylate residues. Interacts with the nuclear export factor CRM1 and with the importin SXM1. Interacts with RNA15, a component of the cleavage factor IA (CFIA) complex. Interacts with translation initiation factor eIF4G (TIF4631 or TIF4632) and release factor eRF3 (SUP35). Interacts with the PAB-dependent poly(A)-nuclease (PAN) complex regulatory subunit PAN3. Interacts with ARF1, DCP1, PBP1, the Hsp70 chaperone SSA1, and TPA1. Interacts with PAT1 in an RNA-dependent manner.

It is found in the cytoplasm. The protein resides in the nucleus. Its function is as follows. Binds the poly(A) tail of mRNA. Appears to be an important mediator of the multiple roles of the poly(A) tail in mRNA biogenesis, stability and translation. In the nucleus, interacts with the nuclear cleavage factor IA (CFIA), which is required for both mRNA cleavage and polyadenylation. Is also required for efficient mRNA export to the cytoplasm. Acts in concert with a poly(A)-specific nuclease (PAN) to affect poly(A) tail shortening, which may occur concomitantly with either nucleocytoplasmic mRNA transport or translational initiation. Regulates PAN activity via interaction with the stimulator PAN3 or the inhibitor PBP1. In the cytoplasm, affects both translation and mRNA decay. Stimulates translation by interaction with translation initiation factor eIF4G, a subunit of the cap-binding complex eIF4F, bringing the 5'- and 3'-ends of the mRNA in proximity. The formation of this circular mRNP structure appears to be critical for the synergistic effects of the cap and the poly(A) tail in facilitating translation initiation, recycling of ribosomes, and mRNA stability. Also regulates translation termination by recruiting eukaryotic release factor 3 (eRF3). Interaction with eRF3 is also required for regulation of normal mRNA decay through translation termination-coupled poly(A) shortening, probably mediated by PAN. Loss of PAB1 from the mRNP after deadenylation triggers mRNA degradation. Inhibits the major cytoplasmic mRNA deadenylase CCR4-NOT complex. Is also associated peripherally with COPI vesicles through its interaction with ARF1, and this is required for correct localization of the asymmetrically distributed ASH1 mRNA. The protein is Polyadenylate-binding protein, cytoplasmic and nuclear (PAB1) of Saccharomyces cerevisiae (strain ATCC 204508 / S288c) (Baker's yeast).